A 465-amino-acid chain; its full sequence is A-type ATP synthase subunit B (465 aa).

The protein belongs to the ATPase alpha/beta chains family. In terms of assembly, has multiple subunits with at least A(3), B(3), C, D, E, F, H, I and proteolipid K(x).

It is found in the cell membrane. Functionally, component of the A-type ATP synthase that produces ATP from ADP in the presence of a proton gradient across the membrane. The B chain is a regulatory subunit. In Thermococcus kodakarensis (strain ATCC BAA-918 / JCM 12380 / KOD1) (Pyrococcus kodakaraensis (strain KOD1)), this protein is A-type ATP synthase subunit B.